Reading from the N-terminus, the 1009-residue chain is Membrane alanyl aminopeptidase (1009 aa).

The first 15 residues, 1–15, serve as a signal peptide directing secretion; it reads MAAIKLLVLSLACAC. A propeptide spans 16-52 (activation peptide); the sequence is VIAHSPIPPASRTIFLDERLEGGAFENIDAFENIELS. Substrate is bound at residue 338–342; it reads GAMEN. His374 lines the Zn(2+) pocket. The active-site Proton acceptor is Glu375. Residues His378 and Glu397 each contribute to the Zn(2+) site. N-linked (GlcNAc...) asparagine glycosylation occurs at Asn906. The segment at 955-980 is disordered; sequence PSTSTTSTTAAPTTVTQPTITEPSTP. Residue Asp987 is the site of GPI-anchor amidated aspartate attachment. A propeptide spans 988-1009 (removed in mature form); it reads SAMTSFASLFIISLGAILHLIL.

It belongs to the peptidase M1 family. It depends on Zn(2+) as a cofactor.

Its subcellular location is the cell membrane. In terms of biological role, binds to the B.thuringiensis toxin, CryIA(C). This chain is Membrane alanyl aminopeptidase, found in Heliothis virescens (Tobacco budworm moth).